The sequence spans 100 residues: Small ribosomal subunit protein uS14c (100 aa).

It belongs to the universal ribosomal protein uS14 family. As to quaternary structure, part of the 30S ribosomal subunit.

Its subcellular location is the plastid. The protein localises to the chloroplast. Functionally, binds 16S rRNA, required for the assembly of 30S particles. The protein is Small ribosomal subunit protein uS14c of Lotus japonicus (Lotus corniculatus var. japonicus).